Here is a 113-residue protein sequence, read N- to C-terminus: MAALGSPSHTFRGLLRELRYLSAATGRPYRDTAAYRYLVKAFRAHRVTSEKLCRAQHELHFQAATYLCLLRSIRKHVALHQEFHGKGERSVEESAGLVGLKLPHQPGGKGWEP.

The interval serine 94–proline 113 is disordered.

This sequence belongs to the FMC1 family. As to quaternary structure, interacts with ATPAF2.

It is found in the mitochondrion. Plays a role in the assembly/stability of the mitochondrial membrane ATP synthase (F(1)F(0) ATP synthase or Complex V). This chain is Protein FMC1 homolog, found in Homo sapiens (Human).